Consider the following 116-residue polypeptide: NADH-ubiquinone oxidoreductase chain 3 (116 aa).

The next 3 helical transmembrane spans lie at 4-24 (LIIT…IAFW), 56-76 (FFLI…LLPL), and 88-108 (TLIL…YEWI).

Belongs to the complex I subunit 3 family. Core subunit of respiratory chain NADH dehydrogenase (Complex I) which is composed of 45 different subunits. Interacts with TMEM186. Interacts with TMEM242.

It is found in the mitochondrion inner membrane. It carries out the reaction a ubiquinone + NADH + 5 H(+)(in) = a ubiquinol + NAD(+) + 4 H(+)(out). In terms of biological role, core subunit of the mitochondrial membrane respiratory chain NADH dehydrogenase (Complex I) which catalyzes electron transfer from NADH through the respiratory chain, using ubiquinone as an electron acceptor. Essential for the catalytic activity of complex I. This chain is NADH-ubiquinone oxidoreductase chain 3, found in Osphranter robustus (Wallaroo).